The chain runs to 377 residues: Protein-tyrosine sulfotransferase 2 (377 aa).

At 1–8 (MRLSMRRA) the chain is on the cytoplasmic side. A helical; Signal-anchor for type II membrane protein membrane pass occupies residues 9–25 (LLAAGLALALVLAVHLG). At 26 to 377 (QRVLECQAVL…NSTSSHLGSS (352 aa)) the chain is on the lumenal side. 78–82 (RSGTT) serves as a coordination point for 3'-phosphoadenylyl sulfate. A disulfide bridge links Cys96 with Cys156. Glu99 (proton donor/acceptor) is an active-site residue. Residues 101–105 (RIIPR) form an interaction with peptide substrate region. Residues Arg183, Ser191, and Arg195 each coordinate 3'-phosphoadenylyl sulfate. Cys225 and Cys233 are oxidised to a cystine. 3'-phosphoadenylyl sulfate contacts are provided by residues Tyr238, 285-294 (STDQVIKPVN), and Lys300. Residues Asn343 and Asn368 are each glycosylated (N-linked (GlcNAc...) asparagine).

Belongs to the protein sulfotransferase family. In terms of assembly, homodimer. Can also form heterodimers with TPST1. In terms of processing, N-glycosylated.

It localises to the golgi apparatus membrane. The catalysed reaction is L-tyrosyl-[protein] + 3'-phosphoadenylyl sulfate = O-sulfo-L-tyrosine-[protein] + adenosine 3',5'-bisphosphate + H(+). In terms of biological role, catalyzes the O-sulfation of tyrosine residues within acidic motifs of polypeptides, using 3'-phosphoadenylyl sulfate (PAPS) as cosubstrate. The sequence is that of Protein-tyrosine sulfotransferase 2 (TPST2) from Bos taurus (Bovine).